A 215-amino-acid polypeptide reads, in one-letter code: Cytochrome b6 (215 aa).

A helical transmembrane segment spans residues 32–52; it reads IFYCLGGITLVCFLIQFATGF. Cys-35 provides a ligand contact to heme c. Residues His-86 and His-100 each coordinate heme b. 3 helical membrane-spanning segments follow: residues 90–110, 116–136, and 186–206; these read ASMM…TGGF, LTWV…VTGY, and LHTF…FLMI. Heme b is bound by residues His-187 and His-202.

It belongs to the cytochrome b family. PetB subfamily. As to quaternary structure, the 4 large subunits of the cytochrome b6-f complex are cytochrome b6, subunit IV (17 kDa polypeptide, PetD), cytochrome f and the Rieske protein, while the 4 small subunits are PetG, PetL, PetM and PetN. The complex functions as a dimer. Heme b is required as a cofactor. The cofactor is heme c.

It localises to the cellular thylakoid membrane. Functionally, component of the cytochrome b6-f complex, which mediates electron transfer between photosystem II (PSII) and photosystem I (PSI), cyclic electron flow around PSI, and state transitions. The chain is Cytochrome b6 from Synechococcus sp. (strain JA-3-3Ab) (Cyanobacteria bacterium Yellowstone A-Prime).